Here is a 279-residue protein sequence, read N- to C-terminus: Urease accessory protein UreD (279 aa).

The protein belongs to the UreD family. As to quaternary structure, ureD, UreF and UreG form a complex that acts as a GTP-hydrolysis-dependent molecular chaperone, activating the urease apoprotein by helping to assemble the nickel containing metallocenter of UreC. The UreE protein probably delivers the nickel.

The protein localises to the cytoplasm. Its function is as follows. Required for maturation of urease via the functional incorporation of the urease nickel metallocenter. The chain is Urease accessory protein UreD from Pseudomonas fluorescens (strain Pf0-1).